A 129-amino-acid polypeptide reads, in one-letter code: MRLFHRLLMATPSTMGSKSSLSEALALLPPLQLYRRILRVHRRKLDPEMRILGDSYVKSEFRAHRNVENPLHIIGFLTEWQLYAQKLEGDAWVGEKLDKSKLDKMSDQQIGQLYELMQAIKNPEGEGKE.

Belongs to the complex I LYR family. SDHAF3 subfamily. Interacts with the iron-sulfur protein subunit within the SDH catalytic dimer.

It is found in the mitochondrion matrix. Its function is as follows. Plays an essential role in the assembly of succinate dehydrogenase (SDH), an enzyme complex (also referred to as respiratory complex II) that is a component of both the tricarboxylic acid (TCA) cycle and the mitochondrial electron transport chain, and which couples the oxidation of succinate to fumarate with the reduction of ubiquinone (coenzyme Q) to ubiquinol. Promotes maturation of the iron-sulfur protein subunit of the SDH catalytic dimer, protecting it from the deleterious effects of oxidants. May act together with SDHAF1. This Aspergillus fumigatus (strain ATCC MYA-4609 / CBS 101355 / FGSC A1100 / Af293) (Neosartorya fumigata) protein is Succinate dehydrogenase assembly factor 3, mitochondrial.